The chain runs to 248 residues: Inner membrane protein pE248R (248 aa).

The N-myristoyl glycine; by host moiety is linked to residue Gly2. Residues 2-199 (GGSTSKNSFK…ADAISAVFKN (198 aa)) are Cytoplasmic-facing. A helical membrane pass occupies residues 200–220 (IMVAAVVIVLIIVGFIAVFYF). Residues 221–248 (LHSRHRHEEEEEAEPLISNKVLKNAAVS) lie on the Extracellular side of the membrane.

This sequence belongs to the asfivirus E248R family. In terms of assembly, interacts with A151R.

The protein localises to the host membrane. The protein resides in the virion membrane. In terms of biological role, essential for viral fusion with host endosomal membrane and core release. The chain is Inner membrane protein pE248R from Ornithodoros (relapsing fever ticks).